A 329-amino-acid polypeptide reads, in one-letter code: Cytosolic arginine sensor for mTORC1 subunit 2 (329 aa).

2 consecutive ACT domains span residues 72–140 (ADAT…HTLS) and 262–322 (ELWK…SALK).

The protein belongs to the GATS family. Forms homodimers and heterodimers with CASTOR1. Interacts with the GATOR2 complex which is composed of MIOS, SEC13, SEH1L, WDR24 and WDR59; the interaction is not regulated by arginine. In terms of tissue distribution, widely expressed.

Its subcellular location is the cytoplasm. It is found in the cytosol. Functionally, functions as a negative regulator of the TORC1 signaling pathway through the GATOR complex. As part of homodimers or heterodimers with CASTOR1, directly binds and inhibits the GATOR subcomplex GATOR2 and thereby mTORC1. Does not directly bind arginine, but binding of arginine to CASTOR1 disrupts the interaction of CASTOR2-containing heterodimers with GATOR2 which can in turn activate mTORC1 and the TORC1 signaling pathway. The polypeptide is Cytosolic arginine sensor for mTORC1 subunit 2 (Homo sapiens (Human)).